Consider the following 142-residue polypeptide: Large ribosomal subunit protein uL16 (142 aa).

It belongs to the universal ribosomal protein uL16 family. As to quaternary structure, part of the 50S ribosomal subunit.

Its function is as follows. Binds 23S rRNA and is also seen to make contacts with the A and possibly P site tRNAs. The chain is Large ribosomal subunit protein uL16 from Thermosipho melanesiensis (strain DSM 12029 / CIP 104789 / BI429).